Reading from the N-terminus, the 191-residue chain is CASP-like protein 1D1 (191 aa).

The Cytoplasmic segment spans residues 1-22 (MTSTSKDTPESGYAVPPPNLFG). Residues 23–43 (VDFGLRLLLLASAVSALVVLV) traverse the membrane as a helical segment. Topologically, residues 44-73 (TSKQTESIPTSLPPPFPAFISRDAKFQHSP) are extracellular. Residues 74–94 (AFIYLLVALSVTCFYSIITMV) traverse the membrane as a helical segment. Residues 95-118 (ASFAAITSPSSSPRMLFHLVLSDA) are Cytoplasmic-facing. A helical membrane pass occupies residues 119 to 139 (VMAGVMASAAGTAGSVAYLGL). The Extracellular segment spans residues 140-160 (KGNSHVNWNKVCNVYDKFCRH). A helical membrane pass occupies residues 161 to 181 (VGSSAAVSLVASVLLVSLVVL). Residues 182-191 (SSYSLYRRCR) are Cytoplasmic-facing.

Belongs to the Casparian strip membrane proteins (CASP) family. Homodimer and heterodimers.

It is found in the cell membrane. The chain is CASP-like protein 1D1 from Musa acuminata (Banana).